Consider the following 107-residue polypeptide: Urease subunit beta (107 aa).

This sequence belongs to the urease beta subunit family. As to quaternary structure, heterotrimer of UreA (gamma), UreB (beta) and UreC (alpha) subunits. Three heterotrimers associate to form the active enzyme.

The protein resides in the cytoplasm. It carries out the reaction urea + 2 H2O + H(+) = hydrogencarbonate + 2 NH4(+). Its pathway is nitrogen metabolism; urea degradation; CO(2) and NH(3) from urea (urease route): step 1/1. This Janthinobacterium sp. (strain Marseille) (Minibacterium massiliensis) protein is Urease subunit beta.